Reading from the N-terminus, the 376-residue chain is Formate dehydrogenase 2 (376 aa).

Residues Val97 and Asn121 each coordinate substrate. Residues 176–177, Asp197, 244–248, Thr270, Asp296, and 325–328 contribute to the NAD(+) site; these read RI, PLHKD, and HISG.

Belongs to the D-isomer specific 2-hydroxyacid dehydrogenase family. FDH subfamily. As to quaternary structure, homodimer.

The protein localises to the cytoplasm. It catalyses the reaction formate + NAD(+) = CO2 + NADH. Its function is as follows. Catalyzes the NAD(+)-dependent oxidation of formate to carbon dioxide. Formate oxidation is the final step in the methanol oxidation pathway in methylotrophic microorganisms. Has a role in the detoxification of exogenous formate in non-methylotrophic organisms. This chain is Formate dehydrogenase 2 (FDH2), found in Saccharomyces cerevisiae (strain CEN.PK113-7D) (Baker's yeast).